Here is a 551-residue protein sequence, read N- to C-terminus: Solute carrier family 22 member 6 (551 aa).

Over 1-23 (MAFNDLLKQVGGVGRFQRIQVTL) the chain is Cytoplasmic. The helical transmembrane segment at 24–44 (VVLPLLLMASHNTLQNFTAAI) threads the bilayer. Residues 45–135 (PPHHCRPPAH…LVCSHRALRQ (91 aa)) are Extracellular-facing. N-linked (GlcNAc...) asparagine glycans are attached at residues N56, N92, and N113. The chain crosses the membrane as a helical span at residues 136 to 156 (LGQSLYMAGVLIGAMVFGYLA). Topologically, residues 157-164 (DRLGRRKV) are cytoplasmic. Residues 165 to 187 (LILNYLQTAVSGTCAAFSPNFTV) form a helical membrane-spanning segment. Over 188-195 (YCTFRLLS) the chain is Extracellular. The helical transmembrane segment at 196–216 (GMSLAGIALNCMTLNVEWMPI) threads the bilayer. Residues 217–224 (HTRAYVGT) are Cytoplasmic-facing. Residues 225–245 (LAGYVYSTGQFLLAGVAYAVP) form a helical membrane-spanning segment. Over 246–248 (HWR) the chain is Extracellular. A helical membrane pass occupies residues 249–269 (YLQLLVSVPFFAFFVYSWFFI). The Cytoplasmic segment spans residues 270 to 337 (ESARWYSTPG…ELLRCPALRH (68 aa)). Residues 338–358 (LFLCLSLLWFATSFAYYGLVM) traverse the membrane as a helical segment. The Extracellular segment spans residues 359–368 (DLQGFGVSIY). The chain crosses the membrane as a helical span at residues 369 to 389 (LIQVIFGAVDLPAKLVCFLVI). The Cytoplasmic segment spans residues 390 to 395 (NSLGRR). The helical transmembrane segment at 396-416 (PAQMASLLLAGICILVNGVIP) threads the bilayer. Residues 417-425 (RDQSIVRTS) lie on the Extracellular side of the membrane. The helical transmembrane segment at 426–446 (LAVLGKGCLASSFNCIFLYTG) threads the bilayer. Residues 447-484 (ELYPTMIRQTGLGMGSTMARVGSIVSPLVSMTSELYPS) lie on the Cytoplasmic side of the membrane. The chain crosses the membrane as a helical span at residues 485–505 (LPLFIYGAVPVAASAATALLP). The Extracellular portion of the chain corresponds to 506–551 (ETLGQPLPDTVQDLESRRRGKPRRQQQEQQKQMVPLQASVQEKNGL). Residues 520–551 (ESRRRGKPRRQQQEQQKQMVPLQASVQEKNGL) are disordered.

It belongs to the major facilitator (TC 2.A.1) superfamily. Organic cation transporter (TC 2.A.1.19) family. Post-translationally, glycosylated. Glycosylation is necessary for proper targeting of the transporter to the plasma membrane.

It localises to the basolateral cell membrane. The protein resides in the basal cell membrane. It carries out the reaction (6R)-L-erythro-5,6,7,8-tetrahydrobiopterin(out) + a dicarboxylate(in) = (6R)-L-erythro-5,6,7,8-tetrahydrobiopterin(in) + a dicarboxylate(out). It catalyses the reaction L-erythro-7,8-dihydrobiopterin(out) + a dicarboxylate(in) = L-erythro-7,8-dihydrobiopterin(in) + a dicarboxylate(out). The catalysed reaction is L-sepiapterin(out) + a dicarboxylate(in) = L-sepiapterin(in) + a dicarboxylate(out). The enzyme catalyses prostaglandin F2alpha(out) + a dicarboxylate(in) = prostaglandin F2alpha(in) + a dicarboxylate(out). It carries out the reaction prostaglandin E2(out) + a dicarboxylate(in) = prostaglandin E2(in) + a dicarboxylate(out). It catalyses the reaction 3',5'-cyclic AMP(out) + a dicarboxylate(in) = 3',5'-cyclic AMP(in) + a dicarboxylate(out). The catalysed reaction is 3',5'-cyclic GMP(out) + a dicarboxylate(in) = 3',5'-cyclic GMP(in) + a dicarboxylate(out). The enzyme catalyses urate(out) + a dicarboxylate(in) = urate(in) + a dicarboxylate(out). It carries out the reaction kynurenate(out) + glutarate(in) = kynurenate(in) + glutarate(out). It catalyses the reaction (indol-3-yl)acetate(out) + a dicarboxylate(in) = (indol-3-yl)acetate(in) + a dicarboxylate(out). The catalysed reaction is indoxyl sulfate(out) + a dicarboxylate(in) = indoxyl sulfate(in) + a dicarboxylate(out). The enzyme catalyses N-benzoylglycine(out) + a dicarboxylate(in) = N-benzoylglycine(in) + a dicarboxylate(out). It carries out the reaction 3-carboxy-4-methyl-5-propyl-2-furanpropanoate(out) + a dicarboxylate(in) = 3-carboxy-4-methyl-5-propyl-2-furanpropanoate(in) + a dicarboxylate(out). Functionally, secondary active transporter that functions as a Na(+)-independent organic anion (OA)/dicarboxylate antiporter where the uptake of one molecule of OA into the cell is coupled with an efflux of one molecule of intracellular dicarboxylate such as 2-oxoglutarate or glutarate. Mediates the uptake of OA across the basolateral side of proximal tubule epithelial cells, thereby contributing to the renal elimination of endogenous OA from the systemic circulation into the urine. Functions as a biopterin transporters involved in the uptake and the secretion of coenzymes tetrahydrobiopterin (BH4), dihydrobiopterin (BH2) and sepiapterin to urine, thereby determining baseline levels of blood biopterins. Transports prostaglandin E2 (PGE2) and prostaglandin F2-alpha (PGF2-alpha) and may contribute to their renal excretion. Also mediates the uptake of cyclic nucleotides such as cAMP and cGMP. Involved in the transport of neuroactive tryptophan metabolites kynurenate (KYNA) and xanthurenate (XA) and may contribute to their secretion from the brain. May transport glutamate. Also involved in the disposition of uremic toxins and potentially toxic xenobiotics by the renal organic anion secretory pathway, helping reduce their undesired toxicological effects on the body. Uremic toxins include the indoxyl sulfate (IS), hippurate/N-benzoylglycine (HA), indole acetate (IA), 3-carboxy-4- methyl-5-propyl-2-furanpropionate (CMPF) and urate. Xenobiotics include the mycotoxin ochratoxin (OTA). May also contribute to the transport of organic compounds in testes across the blood-testis-barrier. May also work as a bidirectional OA/dicarboxylate exchanger. The chain is Solute carrier family 22 member 6 from Oryctolagus cuniculus (Rabbit).